We begin with the raw amino-acid sequence, 1100 residues long: Guanylate cyclase 2G (1100 aa).

Positions 1–43 are cleaved as a signal peptide; that stretch reads MASRARSEPPLEHRFYGGAESHAGHSSLVLTLFVVMLMTCLEA. At 44 to 481 the chain is on the extracellular side; it reads AKLTVGFHAP…GAGMTASVTA (438 aa). N-linked (GlcNAc...) asparagine glycans are attached at residues Asn-55, Asn-85, Asn-94, Asn-418, and Asn-443. The helical transmembrane segment at 482–502 threads the bilayer; the sequence is VIPTVTLLVVASAAAITGLML. The Cytoplasmic portion of the chain corresponds to 503–1100; sequence WRLRGKVQNH…EEEAKVPEIL (598 aa). The region spanning 549–826 is the Protein kinase domain; the sequence is STVKISADCG…PAFPSIKKTL (278 aa). The region spanning 901–1031 is the Guanylate cyclase domain; the sequence is TIFFSDIVGF…DTVNMASRME (131 aa).

Belongs to the adenylyl cyclase class-4/guanylyl cyclase family. Homooligomer. May interact with NPR1/GC-A. In terms of processing, N-glycosylated. In terms of tissue distribution, expressed in lung, kidney and skeletal muscle. Low levels in intestine.

The protein resides in the cell membrane. The protein localises to the cytoplasm. It carries out the reaction GTP = 3',5'-cyclic GMP + diphosphate. The protein is Guanylate cyclase 2G (Gucy2g) of Rattus norvegicus (Rat).